Consider the following 339-residue polypeptide: Cathepsin L-like peptidase (339 aa).

The N-terminal stretch at 1-16 (MKILILLVAFVAAANA) is a signal peptide. The propeptide at 17-121 (VSLYELVKEE…VTFIEPANVE (105 aa)) is activation peptide. N-linked (GlcNAc...) asparagine glycosylation is present at asparagine 95. 3 cysteine pairs are disulfide-bonded: cysteine 143/cysteine 186, cysteine 177/cysteine 219, and cysteine 278/cysteine 328. Cysteine 146 is a catalytic residue. Residues histidine 285 and asparagine 306 contribute to the active site.

This sequence belongs to the peptidase C1 family. As to quaternary structure, dimer of a heavy and a light chain linked by disulfide bonds. Interacts with cystatin; the interaction results in inhibition of cathepsin L-like peptidase activity. Salivary gland. Midgut.

It carries out the reaction Specificity close to that of papain. As compared to cathepsin B, cathepsin L exhibits higher activity toward protein substrates, but has little activity on Z-Arg-Arg-NHMec, and no peptidyl-dipeptidase activity.. With respect to regulation, more active in the presence of a reducing agent DTT. Functionally, proteinase exhibiting preference for Leu, Val and Phe residues at the P2 position. This is Cathepsin L-like peptidase from Aedes aegypti (Yellowfever mosquito).